The following is a 267-amino-acid chain: Undecaprenyl-diphosphatase (267 aa).

8 helical membrane-spanning segments follow: residues T5 to S25, F45 to L65, I82 to I102, F108 to V128, F143 to V163, A183 to L203, A213 to V233, and Y243 to L263.

It belongs to the UppP family.

Its subcellular location is the cell inner membrane. The catalysed reaction is di-trans,octa-cis-undecaprenyl diphosphate + H2O = di-trans,octa-cis-undecaprenyl phosphate + phosphate + H(+). Functionally, catalyzes the dephosphorylation of undecaprenyl diphosphate (UPP). Confers resistance to bacitracin. The protein is Undecaprenyl-diphosphatase of Paracoccus denitrificans (strain Pd 1222).